The chain runs to 291 residues: Ribosomal protein L11 methyltransferase (291 aa).

4 residues coordinate S-adenosyl-L-methionine: T136, G159, D181, and N228.

The protein belongs to the methyltransferase superfamily. PrmA family.

The protein localises to the cytoplasm. It catalyses the reaction L-lysyl-[protein] + 3 S-adenosyl-L-methionine = N(6),N(6),N(6)-trimethyl-L-lysyl-[protein] + 3 S-adenosyl-L-homocysteine + 3 H(+). In terms of biological role, methylates ribosomal protein L11. The protein is Ribosomal protein L11 methyltransferase of Rhizobium meliloti (strain 1021) (Ensifer meliloti).